The primary structure comprises 147 residues: UPF0260 protein Ent638_2368 (147 aa).

The protein belongs to the UPF0260 family.

In Enterobacter sp. (strain 638), this protein is UPF0260 protein Ent638_2368.